We begin with the raw amino-acid sequence, 547 residues long: Chaperonin GroEL (547 aa).

Residues 29 to 32 (TLGP), 86 to 90 (DGTTT), G413, 478 to 480 (DVL), and D494 each bind ATP.

It belongs to the chaperonin (HSP60) family. In terms of assembly, forms a cylinder of 14 subunits composed of two heptameric rings stacked back-to-back. Interacts with the co-chaperonin GroES.

Its subcellular location is the cytoplasm. The enzyme catalyses ATP + H2O + a folded polypeptide = ADP + phosphate + an unfolded polypeptide.. Its function is as follows. Together with its co-chaperonin GroES, plays an essential role in assisting protein folding. The GroEL-GroES system forms a nano-cage that allows encapsulation of the non-native substrate proteins and provides a physical environment optimized to promote and accelerate protein folding. The polypeptide is Chaperonin GroEL (Alkaliphilus metalliredigens (strain QYMF)).